The following is a 243-amino-acid chain: Geranylgeranylglyceryl phosphate synthase (243 aa).

Residues D22 and S51 each contribute to the Mg(2+) site. Residues Y169–G175, G200–G201, and G222–T223 contribute to the sn-glycerol 1-phosphate site.

The protein belongs to the GGGP/HepGP synthase family. Group II subfamily. Requires Mg(2+) as cofactor.

It is found in the cytoplasm. It carries out the reaction sn-glycerol 1-phosphate + (2E,6E,10E)-geranylgeranyl diphosphate = sn-3-O-(geranylgeranyl)glycerol 1-phosphate + diphosphate. It participates in membrane lipid metabolism; glycerophospholipid metabolism. Functionally, prenyltransferase that catalyzes the transfer of the geranylgeranyl moiety of geranylgeranyl diphosphate (GGPP) to the C3 hydroxyl of sn-glycerol-1-phosphate (G1P). This reaction is the first ether-bond-formation step in the biosynthesis of archaeal membrane lipids. The sequence is that of Geranylgeranylglyceryl phosphate synthase from Methanosphaera stadtmanae (strain ATCC 43021 / DSM 3091 / JCM 11832 / MCB-3).